Reading from the N-terminus, the 379-residue chain is DnaJ homolog subfamily B member 14 (379 aa).

Residues 1–244 (MEGNRDEAEK…GHEREEERAD (244 aa)) are Cytoplasmic-facing. Residues 56–90 (TAGSSTHCRKPPGSSDQSKPSCGKDGTSGAGEGGK) form a disordered region. One can recognise a J domain in the interval 108-172 (NYYEVLGVTK…EKRKQYDLTG (65 aa)). The helical transmembrane segment at 245-265 (GGFSVFIQLMPIIVLILVSLL) threads the bilayer. At 266–379 (SQLMVSNPPY…ERLTSLYKGG (114 aa)) the chain is on the lumenal side.

The protein belongs to the DnaJ family. DNAJB12/DNAJB14 subfamily. As to quaternary structure, interacts (via J domain) with HSPA8/Hsc70. Forms a multiprotein complex, at least composed of DNAJB12, DNAJB14, HSPA8/Hsc70 and SGTA; interaction with DNAJB14 and HSPA8/Hsc70 is direct.

It is found in the endoplasmic reticulum membrane. It localises to the nucleus membrane. Functionally, acts as a co-chaperone with HSPA8/Hsc70; required to promote protein folding and trafficking, prevent aggregation of client proteins, and promote unfolded proteins to endoplasmic reticulum-associated degradation (ERAD) pathway. Acts by determining HSPA8/Hsc70's ATPase and polypeptide-binding activities. Can also act independently of HSPA8/Hsc70: together with DNAJB12, acts as a chaperone that promotes maturation of potassium channels KCND2 and KCNH2 by stabilizing nascent channel subunits and assembling them into tetramers. While stabilization of nascent channel proteins is dependent on HSPA8/Hsc70, the process of oligomerization of channel subunits is independent of HSPA8/Hsc70. When overexpressed, forms membranous structures together with DNAJB12 and HSPA8/Hsc70 within the nucleus; the role of these structures, named DJANGOs, is still unclear. The chain is DnaJ homolog subfamily B member 14 from Mus musculus (Mouse).